A 164-amino-acid chain; its full sequence is 3-hydroxyacyl-[acyl-carrier-protein] dehydratase FabZ (164 aa).

Residue H61 is part of the active site.

Belongs to the thioester dehydratase family. FabZ subfamily.

The protein localises to the cytoplasm. It carries out the reaction a (3R)-hydroxyacyl-[ACP] = a (2E)-enoyl-[ACP] + H2O. Its function is as follows. Involved in unsaturated fatty acids biosynthesis. Catalyzes the dehydration of short chain beta-hydroxyacyl-ACPs and long chain saturated and unsaturated beta-hydroxyacyl-ACPs. This is 3-hydroxyacyl-[acyl-carrier-protein] dehydratase FabZ from Ralstonia nicotianae (strain ATCC BAA-1114 / GMI1000) (Ralstonia solanacearum).